Reading from the N-terminus, the 88-residue chain is uncharacterized protein (88 aa).

This is an uncharacterized protein from Homo sapiens (Human).